The following is a 342-amino-acid chain: L-threonine 3-dehydrogenase (342 aa).

Cysteine 38 is a Zn(2+) binding site. Residues threonine 40 and histidine 43 each act as charge relay system in the active site. 6 residues coordinate Zn(2+): histidine 63, glutamate 64, cysteine 93, cysteine 96, cysteine 99, and cysteine 107. Residues isoleucine 175, aspartate 195, arginine 200, 262-264 (LGI), and 286-287 (IY) each bind NAD(+).

The protein belongs to the zinc-containing alcohol dehydrogenase family. Homotetramer. The cofactor is Zn(2+).

The protein localises to the cytoplasm. The enzyme catalyses L-threonine + NAD(+) = (2S)-2-amino-3-oxobutanoate + NADH + H(+). The protein operates within amino-acid degradation; L-threonine degradation via oxydo-reductase pathway; glycine from L-threonine: step 1/2. Its function is as follows. Catalyzes the NAD(+)-dependent oxidation of L-threonine to 2-amino-3-ketobutyrate. This is L-threonine 3-dehydrogenase from Burkholderia cenocepacia (strain HI2424).